The primary structure comprises 2135 residues: MPSVVALDLCQLFDRSVARTPHQLAVDHESGSLTYTELDVASSNLARKLKQEGVVPGEAVLLLTEHGTRNVVALLAILKAHACYVPLDRSSWSSERIQAVLDGTDSRILINTTVEPFESPRHKVIHLTSADVTTLSTDRSTTKVIPDIAPEDLACLIFTSGSTGVPKGVMIPHRAVANYAQTSPFNMDVQPGDRVLHILSVSFDASTGMLFSILGNSGIVVPATMDTLFDKAQSCSILASTPSILATLPLPTALPDSYPYVHTILLGGESPPAPLLSSWLQFGVRILNAYGPTETTCASLMQEVEVCQETGMINRSIIGRPMPNGPVYLLQPDTLLPVEEEGEEGEIAIAGVGLAHGYYRNAALTAEKFIEWHGKRVYRTGDQGRWTRRNDGQRVVEFRGRSDRTVKNRGFLVNLPADVEEPLRQMGFGVTDVYASLINGLLVALVTPATADLDGLQSEADRRLSSFHRPGRYLAVDQFPLSANGKIDTKAIENMLKEYQARLCEGTDDEETTGGERPTEREQVIAECMYTALGLDLPSASASKDFNFFAMGGNSLAALRFTSLCRERGILLTTRDLYLHPTVRGILPYARDLAHSGLPLPDKEEQIDHRLSLKAEVAAALHLLGDIDVAPLTPLQLQLSAPIFQSDGTNTNQLRQSYPLASAEHICNAWRQVVLSEPVFRTQIALDIGPGVQIVHAQPRCQPQEITFHRREDYNAALSDPSRLPVGLGMRLEFMKFMPNDDDDDEGEVTVVWTAHHSLIDGYSLGLILARVQQASQGVASSRVSSFVDAAWNLLSVQKQRDTEARRFWEQYLQPVRSLTKAEATTTPVARPYLAQEVLFKHVGGVDELHRLASSCSVTLAAVYYTAWAMTIARTTKSTLVTLGVVFSGREILPDDAQAVGPLMATLPLVCRIDGEASIERQLQTTFEGLATISTYAWSAPDQIGYRVDSLLATQYDFPTYDQPIPPQKEQFFENTTFALSLLVEADARFRLVYNPSVHGEQTVQQYADTFQQALQALVGDSTMEAWLTGPTKAPLAVDQASDIQHVNVPNVASAFYASVDLHKDLIAVDGPGGTLPYRELDQKSNAVASHIAKHFSRAQVIAIHADGTLNWVVGILGILKAGCAYCPLDPAYPIARRVAVYEQSGASALLIPNACSSSAALLPITDLRVFTIQETETSDTSRQPSLLANANEDALIVFTSGTTGRPKGVPISHRGLLALQSNPEATMFSRPGRRIAQFMSPAFDYCANEIFSALLHGGTLVLRDPSDPLAHLAKVDVSTITPSVLSVLNPDDYPNLDMVYATGEPVTPGLLARWGEGRAFYNAYGPAECSICTSFTRLEPGQQVTIGNAVRTARMYILDPDLQPVSDGQTGEIFLAGQQVMRGYVGDDAKTAYSVLPDPWHPGERMYRTGDYGYWNADRQIVYIGRLDRQVKIRGFRVELAAVEQKMYQEEPRLTQAAALVVNDTLVAFVMPLDVDVSRLEQRLRESLQPSWVPQVITALEEFPWTANRKVDYRKLAERATLTRPEDSLPQQKTPAGMTAKDASIADGIATLWKNVLRLQAGGGSRKLCEDDDFRALGGHSVLQMMLAARLGSTFGISVSMRDVIEHSTLAEQVELVRRKRQASTAKPRTICDAFPDHCLSPLERQTWFQYLIAADVRTFNIPVLLHLGGTFDRDRLVQSFNAVLASRKIFRTNFVETSLGPCRIFRDTPPRVLVCDGALDTTKEIDRSFDLARDELIRVFLDRRTLLVVTSHAVADLNSVQNLLQDVSGVYAGRTTPTPDRWHYPRAPAWSRQATEQERKFWSKYLEGAPQRLDIPRYPGQMAFEGRSRVSEFKGDLVRRAVTLGQEHGLSQHQLVCAAVAQTLQWLAGSNDVVLGSPWANRGHTVEQESMGLFLDRLPLRFKTPVNADCATILQSTRAASQAAVCNSIPFEQVLNLLHLPRTIRQHPLFEAMVTFHLKGAVEDCLAIEGLEVKREMCFASGAKFLLMFEWTEIEADHWTLRIEYDDHQLDDATVTTIEDSIRCVLEGLADRLSRAAIHERLNAMHKTARTKVDWNFYRRLVGILQREMATCLGVSLDEFPCSVSFFEAGGDSIQAWRLSRQLKRVGLEVPICNIFDHPTAQDLAQRLYRQVL.

The tract at residues 34 to 424 (TYTELDVASS…LPADVEEPLR (391 aa)) is adenylation 1. A Carrier 1 domain is found at 519–594 (TEREQVIAEC…GILPYARDLA (76 aa)). O-(pantetheine 4'-phosphoryl)serine is present on S555. The segment at 663 to 913 (AEHICNAWRQ…MATLPLVCRI (251 aa)) is condensation 1. The segment at 1078–1458 (YRELDQKSNA…YQEEPRLTQA (381 aa)) is adenylation 2. Positions 1544–1622 (ASIADGIATL…EQVELVRRKR (79 aa)) constitute a Carrier 2 domain. An O-(pantetheine 4'-phosphoryl)serine modification is found at S1582. The condensation 2 stretch occupies residues 1642 to 1905 (SPLERQTWFQ…FLDRLPLRFK (264 aa)). A Carrier 3 domain is found at 2061–2134 (RRLVGILQRE…DLAQRLYRQV (74 aa)). An O-(pantetheine 4'-phosphoryl)serine modification is found at S2095.

It belongs to the NRP synthetase family.

Its pathway is mycotoxin biosynthesis. Nonribosomal peptide synthetase; part of the gene cluster that mediates the biosynthesis of gliotoxin, a member of the epipolythiodioxopiperazine (ETP) class of toxins characterized by a disulfide-bridged cyclic dipeptide. The first step in gliotoxin biosynthesis is the condensation of serine and phenylalanine to form the cyclo-L-phenylalanyl-L-serine diketopiperazine (DKP) by the NRPS gliP. GliP is also able to produce the DKP cyclo-L-tryptophanyl-L-serine, suggesting that the substrate specificity of the first adenylation (A) domain in gliP is sufficiently relaxed to accommodate both L-Phe and L-Trp. The cytochrome P450 monooxygenase gliC has been shown to catalyze the subsequent hydroxylation of the alpha-carbon of L-Phe in cyclo-L-phenylalanyl-L-serine whereas the second cytochrome P450 enzyme, gliF, is presumably involved in the modification of the DKP side chain. The glutathione S-transferase (GST) gliG then forms a bis-glutathionylated biosynthetic intermediate which is responsible for the sulfurization of gliotoxin. This bis-glutathionylated intermediate is subsequently processed by the gamma-glutamyl cyclotransferase gliK to remove both gamma-glutamyl moieties. Subsequent processing via gliI yields a biosynthetic intermediate, which is N-methylated via the N-methyltransferase gliN, before the gliotoxin oxidoreductase gliT-mediated disulfide bridge closure. GliN-mediated amide methylation confers stability to ETP, damping the spontaneous formation of tri- and tetrasulfides. Intracellular dithiol gliotoxin oxidized by gliT is subsequently effluxed by gliA. Gliotoxin contributes to pathogenesis during invasive aspergillosis. In macrophages and neutrophils, gliotoxin showed inhibition of various different cell functions including cytokine production, antigen presentation, phagocytosis, and production of reactive oxygen species. The sequence is that of Nonribosomal peptide synthetase gliP from Aspergillus fumigatus (strain ATCC MYA-4609 / CBS 101355 / FGSC A1100 / Af293) (Neosartorya fumigata).